A 769-amino-acid polypeptide reads, in one-letter code: Endonuclease MutS2 (769 aa).

Residue 335–342 coordinates ATP; sequence GGNAGGKT. A Smr domain is found at 694 to 769; the sequence is IDLRGKRADV…GDGMTEVELV (76 aa).

This sequence belongs to the DNA mismatch repair MutS family. MutS2 subfamily. As to quaternary structure, homodimer. Binds to stalled ribosomes, contacting rRNA.

Its function is as follows. Endonuclease that is involved in the suppression of homologous recombination and thus may have a key role in the control of bacterial genetic diversity. In terms of biological role, acts as a ribosome collision sensor, splitting the ribosome into its 2 subunits. Detects stalled/collided 70S ribosomes which it binds and splits by an ATP-hydrolysis driven conformational change. Acts upstream of the ribosome quality control system (RQC), a ribosome-associated complex that mediates the extraction of incompletely synthesized nascent chains from stalled ribosomes and their subsequent degradation. Probably generates substrates for RQC. In Maridesulfovibrio salexigens (strain ATCC 14822 / DSM 2638 / NCIMB 8403 / VKM B-1763) (Desulfovibrio salexigens), this protein is Endonuclease MutS2.